Here is a 316-residue protein sequence, read N- to C-terminus: Neutrophil-stimulating factor 1 (316 aa).

Residues 1 to 21 (METSLPITVVFLIVLITGAQT) form the signal peptide. The interval 126–316 (HGEMLERMTA…WFAVSWNDRG (191 aa)) is involved in interaction with human CD47. N-linked (GlcNAc...) asparagine glycosylation occurs at Asn169.

In terms of assembly, interacts with human CD4. Interacts with human CD47; the interaction results in inhibition of phagocytosis activity of host macrophages. In terms of tissue distribution, female salivary gland (at protein level). Saliva (at protein level). Some expression in ovary and midgut (at protein level).

It localises to the secreted. Functionally, activates host neutrophils; induces expression of IL1B and CXCL2 at the bite site. Promotes activation of human CD4(+) T-cells. Inhibits phagocytosis activity of host macrophages via the interaction with CD47 receptor on their surface. Suppresses expression of pro-inflammatory cytokines, such as IFN-gamma/IFNG, IL2, TNF-alpha/TNF, IL12B, IL8/CXCL8, IL6, in host white blood cells. Reduces host polymorphonuclear neutrophil chemotaxis induced by N-formylmethionine-leucylphenylalanine (fMLF). Reduces CD11b/ITGAM expression in fMLF-induced host polymorphonuclear neutrophils. Its function is as follows. (Microbial infection) Enhances early replication of Zika virus in the host. This chain is Neutrophil-stimulating factor 1, found in Aedes aegypti (Yellowfever mosquito).